We begin with the raw amino-acid sequence, 523 residues long: MLVLLLLVLLLAVPPRRTAELQLGLREPIGAVSPAFLSLTLDASLARDPRFVALLRHPKLHTLASGLSPGFLRFGGTSTDFLIFNPNKDSTWEEKVLSEFQAKDVCEAWPSFAVVPKLLLTQWPLQEKLLLAEHSWKKHKNTTITRSTLDILHTFASSSGFRLVFGLNALLRRAGLQWDSSNAKQLLGYCAQRSYNISWELGNEPNSFRKKSGICIDGFQLGRDFVHLRQLLSQHPLYRHAELYGLDVGQPRKHTQHLLRSFMKSGGKAIDSVTWHHYYVNGRSATREDFLSPEVLDSFATAIHDVLGIVEATVPGKKVWLGETGSAYGGGAPQLSNTYVAGFMWLDKLGLAARRGIDVVMRQVSFGAGSYHLVDAGFKPLPDYWLSLLYKRLVGTRVLQASVEQADARRPRVYLHCTNPRHPKYREGDVTLFALNLSNVTQSLQLPKQLWSKSVDQYLLLPHGKDSILSREVQLNGRLLQMVDDETLPALHEMALAPGSTLGLPAFSYGFYVIRNAKAIACI.

An N-terminal signal peptide occupies residues M1 to T18. Heparan sulfate group is bound by residues D42 to S44, T77, and K137 to N141. N-linked (GlcNAc...) asparagine glycosylation is found at N141 and N196. Catalysis depends on E204, which acts as the Proton donor. Heparan sulfate group contacts are provided by residues Q250–R260, H276, and R283. Residues K268–R397 are required for heterodimerization with the heparanase 8 kDa subunit. Catalysis depends on E323, which acts as the Nucleophile. Heparan sulfate group-binding positions include Y328–G330 and G369–Y371. C417 and C522 form a disulfide bridge. N-linked (GlcNAc...) asparagine glycosylation is found at N436 and N439. Residues F507–I523 are required for transferring proheparanase to the Golgi apparatus, secretion and subsequent enzyme activity and for enhancement of PKB/AKT1 phosphorylation.

It belongs to the glycosyl hydrolase 79 family. Heterodimer; the active enzyme is a heterodimer of the 60 kDa and 45 kDa proteolytic products. Post-translationally, N-glycosylated. Proteolytically cleaved to produce a 60 kDa and a 45 kDa product.

It localises to the secreted. It catalyses the reaction endohydrolysis of (1-&gt;4)-beta-D-glycosidic bonds of heparan sulfate chains in heparan sulfate proteoglycan.. Functionally, endoglycosidase that cleaves heparan sulfate proteoglycans (HSPGs) into heparan sulfate side chains and core proteoglycans. Participates in extracellular matrix (ECM) degradation and remodeling. Selectively cleaves the linkage between a glucuronic acid unit and an N-sulfo glucosamine unit carrying either a 3-O-sulfo or a 6-O-sulfo group. Can also cleave the linkage between a glucuronic acid unit and an N-sulfo glucosamine unit carrying a 2-O-sulfo group, but not linkages between a glucuronic acid unit and a 2-O-sulfated iduronic acid moiety. Increases cell adhesion to the extracellular matrix (ECM), independent of its enzymatic activity. The protein is Heparanase (HPSE) of Gallus gallus (Chicken).